The sequence spans 358 residues: Protein RecA (358 aa).

Residue 67-74 (GPESSGKT) participates in ATP binding.

The protein belongs to the RecA family.

It is found in the cytoplasm. In terms of biological role, can catalyze the hydrolysis of ATP in the presence of single-stranded DNA, the ATP-dependent uptake of single-stranded DNA by duplex DNA, and the ATP-dependent hybridization of homologous single-stranded DNAs. It interacts with LexA causing its activation and leading to its autocatalytic cleavage. In Xenorhabdus bovienii (Xenorhabdus nematophila subsp. bovienii), this protein is Protein RecA.